Here is a 141-residue protein sequence, read N- to C-terminus: Cystatin (141 aa).

An N-terminal signal peptide occupies residues 1 to 26 (MVHSQLPVAAPLRLLCALLLLPSATM). A Cystatin domain is found at 29–129 (GGLSPRSVTD…CHFQVWSRPW (101 aa)). Positions 73 to 77 (QVVAG) match the Secondary area of contact motif. Cystine bridges form between cysteine 91/cysteine 107 and cysteine 120/cysteine 140.

The protein belongs to the cystatin family. Expressed at a low level by the venom gland (at protein level).

The protein resides in the secreted. Its function is as follows. Inhibits various C1 cysteine proteases including cathepsin L, papain and cathepsin B. This protein has no toxic activity and its function in the venom is unknown. It may play a role as a housekeeping or regulatory protein. This chain is Cystatin, found in Pseudonaja textilis (Eastern brown snake).